The sequence spans 119 residues: uncharacterized protein (119 aa).

Residues 67–119 (LGLKEVQKKSNEGLNEVQGVADINKQKRPANSQDSSSVEGDIQNFLEKVTGKN) are disordered. The span at 95–104 (PANSQDSSSV) shows a compositional bias: polar residues.

This is an uncharacterized protein from Anabaena variabilis.